A 611-amino-acid chain; its full sequence is E-selectin (611 aa).

Positions 1–22 (MITSQLLPALTLVLLLFKEGGA) are cleaved as a signal peptide. The C-type lectin domain occupies 23–140 (WSYNASTEAM…CDKKKLALCY (118 aa)). The Extracellular segment spans residues 23-557 (WSYNASTEAM…CEAPTESSIP (535 aa)). Asn26 is a glycosylation site (N-linked (GlcNAc...) asparagine). Cystine bridges form between Cys41-Cys139, Cys112-Cys131, Cys144-Cys155, Cys149-Cys164, Cys166-Cys175, Cys181-Cys225, Cys194-Cys207, Cys211-Cys238, Cys243-Cys287, Cys256-Cys269, Cys273-Cys300, Cys305-Cys350, Cys336-Cys363, Cys368-Cys413, Cys399-Cys426, Cys431-Cys476, Cys462-Cys489, Cys494-Cys535, and Cys521-Cys548. Positions 102, 104, and 110 each coordinate Ca(2+). A carbohydrate-binding positions include 102-110 (EPNNKQNDE), 114-119 (EIYIKR), and 127-129 (NDE). Ca(2+) contacts are provided by Asn127 and Asp128. The EGF-like domain occupies 141–176 (TAACTPTSCSGHGECVETVNNYTCKCHPGFRGLRCE). Residue Asn161 is glycosylated (N-linked (GlcNAc...) asparagine). Sushi domains lie at 179-240 (VTCQ…ACNV) and 241-302 (VECS…TCKA). Asn204 carries an N-linked (GlcNAc...) asparagine glycan. Asn266 carries N-linked (GlcNAc...) asparagine glycosylation. Asn313 and Asn333 each carry an N-linked (GlcNAc...) asparagine glycan. 4 Sushi domains span residues 316–365 (VSCS…VCKA), 367–428 (QCKA…TCEA), 430–491 (KCDA…SCQV), and 492–550 (VQCF…TCEA). N-linked (GlcNAc...) asparagine glycosylation occurs at Asn528. A helical transmembrane segment spans residues 558–579 (LAVGLTAGGTSLLTVASFLLWL). At 580 to 611 (LKRLRKRAKKFVPASSCQSLQSDGSYHMPCSI) the chain is on the cytoplasmic side.

Belongs to the selectin/LECAM family. In terms of assembly, interacts with SELPLG/PSGL1 and PODXL2 through the sialyl Lewis X epitope. SELPLG sulfation appears not to be required for this interaction.

The protein resides in the cell membrane. Its function is as follows. Cell-surface glycoprotein having a role in immunoadhesion. Mediates in the adhesion of blood neutrophils in cytokine-activated endothelium through interaction with SELPLG/PSGL1. May have a role in capillary morphogenesis. This chain is E-selectin (SELE), found in Canis lupus familiaris (Dog).